We begin with the raw amino-acid sequence, 429 residues long: Tol-Pal system protein TolB (429 aa).

Residues 1-28 form the signal peptide; sequence MSITPSFSRRSVVSLLAAGAFSSMSAFA.

The protein belongs to the TolB family. In terms of assembly, the Tol-Pal system is composed of five core proteins: the inner membrane proteins TolA, TolQ and TolR, the periplasmic protein TolB and the outer membrane protein Pal. They form a network linking the inner and outer membranes and the peptidoglycan layer.

It is found in the periplasm. Its function is as follows. Part of the Tol-Pal system, which plays a role in outer membrane invagination during cell division and is important for maintaining outer membrane integrity. The chain is Tol-Pal system protein TolB from Polaromonas naphthalenivorans (strain CJ2).